The sequence spans 328 residues: Biotin synthase (328 aa).

The Radical SAM core domain maps to Phe51–Arg282. Positions 69, 73, and 76 each coordinate [4Fe-4S] cluster. The [2Fe-2S] cluster site is built by Cys112, Cys147, Cys207, and Arg277.

The protein belongs to the radical SAM superfamily. Biotin synthase family. In terms of assembly, homodimer. Requires [4Fe-4S] cluster as cofactor. [2Fe-2S] cluster serves as cofactor.

The enzyme catalyses (4R,5S)-dethiobiotin + (sulfur carrier)-SH + 2 reduced [2Fe-2S]-[ferredoxin] + 2 S-adenosyl-L-methionine = (sulfur carrier)-H + biotin + 2 5'-deoxyadenosine + 2 L-methionine + 2 oxidized [2Fe-2S]-[ferredoxin]. The protein operates within cofactor biosynthesis; biotin biosynthesis; biotin from 7,8-diaminononanoate: step 2/2. Functionally, catalyzes the conversion of dethiobiotin (DTB) to biotin by the insertion of a sulfur atom into dethiobiotin via a radical-based mechanism. This is Biotin synthase from Clostridium acetobutylicum (strain ATCC 824 / DSM 792 / JCM 1419 / IAM 19013 / LMG 5710 / NBRC 13948 / NRRL B-527 / VKM B-1787 / 2291 / W).